Reading from the N-terminus, the 89-residue chain is Small ribosomal subunit protein uS15 (89 aa).

The protein belongs to the universal ribosomal protein uS15 family. As to quaternary structure, part of the 30S ribosomal subunit. Forms a bridge to the 50S subunit in the 70S ribosome, contacting the 23S rRNA.

Functionally, one of the primary rRNA binding proteins, it binds directly to 16S rRNA where it helps nucleate assembly of the platform of the 30S subunit by binding and bridging several RNA helices of the 16S rRNA. Forms an intersubunit bridge (bridge B4) with the 23S rRNA of the 50S subunit in the ribosome. The chain is Small ribosomal subunit protein uS15 from Desulfotalea psychrophila (strain LSv54 / DSM 12343).